We begin with the raw amino-acid sequence, 443 residues long: MRDVPNIGFISLGCPKNLVDSERILTELRSDGYNIIPSYENADLVIVNTCGFIDSAVQESLEAVGEALKENGKVIVTGCLGAKENQIREVHPKVLEITGPHSYEAVMQHVHKYVPRPERNMYTSLVPAQGVKLTPKHYAYLKISEGCDHRCTFCIIPSMRGDLDSRPIVQILDEAKRLADSGVKELLIVSQDTSAYALDQTKENQNKTVFWNGVPIKNNLISLCEQLATLGIWIRLHYVYPYPHVDNLIPLMAEGKILPYLDIPLQHASPKILKAMKRPGSIDRTLERIKQWREICPELTLRSTFIVGFPGETEEDFQMLLDFLTEAQLDRVGCFKFSPVDGAVATEMAEQVPEEVKEERFHRFMQVQQRISVARLQQKIGKTLAIIIDEIDEYGIIGRSMADAPEIDGVVYVDNISQQAVTVGQIILVTITNADEYDLWGTY.

Residues 5–115 (PNIGFISLGC…VMQHVHKYVP (111 aa)) form the MTTase N-terminal domain. 6 residues coordinate [4Fe-4S] cluster: C14, C50, C79, C147, C151, and C154. The Radical SAM core domain occupies 133 to 374 (LTPKHYAYLK…MQVQQRISVA (242 aa)). One can recognise a TRAM domain in the interval 377–443 (QQKIGKTLAI…ADEYDLWGTY (67 aa)).

The protein belongs to the methylthiotransferase family. RimO subfamily. It depends on [4Fe-4S] cluster as a cofactor.

It localises to the cytoplasm. It catalyses the reaction L-aspartate(89)-[ribosomal protein uS12]-hydrogen + (sulfur carrier)-SH + AH2 + 2 S-adenosyl-L-methionine = 3-methylsulfanyl-L-aspartate(89)-[ribosomal protein uS12]-hydrogen + (sulfur carrier)-H + 5'-deoxyadenosine + L-methionine + A + S-adenosyl-L-homocysteine + 2 H(+). Its function is as follows. Catalyzes the methylthiolation of an aspartic acid residue of ribosomal protein uS12. This chain is Ribosomal protein uS12 methylthiotransferase RimO, found in Haemophilus ducreyi (strain 35000HP / ATCC 700724).